Consider the following 154-residue polypeptide: MAEAAPQEAQQNFAIQRIFLKDVSFEAPNSPVIFQKEWNPDVKLDLDTQSRELGEGVYEVVLRLTVTVKNEEETAFLCEVQQGGIFTAEQMEAGQLAHCLGAFCPNILFPYARETISSLVVKGTFPQLNLAPVNFDALFMNYLQQQAQQGEAQA.

It belongs to the SecB family. As to quaternary structure, homotetramer, a dimer of dimers. One homotetramer interacts with 1 SecA dimer.

The protein localises to the cytoplasm. One of the proteins required for the normal export of preproteins out of the cell cytoplasm. It is a molecular chaperone that binds to a subset of precursor proteins, maintaining them in a translocation-competent state. It also specifically binds to its receptor SecA. The polypeptide is Protein-export protein SecB (Vibrio parahaemolyticus serotype O3:K6 (strain RIMD 2210633)).